The primary structure comprises 153 residues: Deoxyuridine 5'-triphosphate nucleotidohydrolase (153 aa).

Residues 71-73 (RSG), asparagine 84, 88-90 (LID), and methionine 98 each bind substrate.

It belongs to the dUTPase family. Mg(2+) serves as cofactor.

The catalysed reaction is dUTP + H2O = dUMP + diphosphate + H(+). The protein operates within pyrimidine metabolism; dUMP biosynthesis; dUMP from dCTP (dUTP route): step 2/2. Functionally, this enzyme is involved in nucleotide metabolism: it produces dUMP, the immediate precursor of thymidine nucleotides and it decreases the intracellular concentration of dUTP so that uracil cannot be incorporated into DNA. In Wigglesworthia glossinidia brevipalpis, this protein is Deoxyuridine 5'-triphosphate nucleotidohydrolase.